The following is a 528-amino-acid chain: Peptide chain release factor 3 (528 aa).

Residues 10 to 280 enclose the tr-type G domain; sequence AKRRTFGIIS…IDMAPAPGPR (271 aa). GTP is bound by residues 19 to 26, 87 to 91, and 141 to 144; these read SHPDAGKT, DTPGH, and NKLD.

The protein belongs to the TRAFAC class translation factor GTPase superfamily. Classic translation factor GTPase family. PrfC subfamily.

Its subcellular location is the cytoplasm. Increases the formation of ribosomal termination complexes and stimulates activities of RF-1 and RF-2. It binds guanine nucleotides and has strong preference for UGA stop codons. It may interact directly with the ribosome. The stimulation of RF-1 and RF-2 is significantly reduced by GTP and GDP, but not by GMP. The protein is Peptide chain release factor 3 of Desulfotalea psychrophila (strain LSv54 / DSM 12343).